We begin with the raw amino-acid sequence, 252 residues long: MSFTVVIPARYASSRLPGKPLADIGGKPMIQWVYEQALQAGAEDVIIATDDKRVSAAAEQFGGKVCMTSPNHESGTERLAEVVEKMAIPADHIVVNVQGDEPLIPPSIIRQVADNLAGCDAPMATLAVEIESEEEVFNPNAVKVVADERGYAMYFSRATIPWDRDNFAKQDKTIANPLMLHIGIYAYRAGFINTYVNWQPSALEQIECLEQLRVLWYGEKIHVEVAKEAPAAGVDTPEDLESVRAIVAKQAQ.

This sequence belongs to the KdsB family.

The protein localises to the cytoplasm. The catalysed reaction is 3-deoxy-alpha-D-manno-oct-2-ulosonate + CTP = CMP-3-deoxy-beta-D-manno-octulosonate + diphosphate. The protein operates within nucleotide-sugar biosynthesis; CMP-3-deoxy-D-manno-octulosonate biosynthesis; CMP-3-deoxy-D-manno-octulosonate from 3-deoxy-D-manno-octulosonate and CTP: step 1/1. Its pathway is bacterial outer membrane biogenesis; lipopolysaccharide biosynthesis. Functionally, activates KDO (a required 8-carbon sugar) for incorporation into bacterial lipopolysaccharide in Gram-negative bacteria. The polypeptide is 3-deoxy-manno-octulosonate cytidylyltransferase (Vibrio campbellii (strain ATCC BAA-1116)).